The sequence spans 473 residues: MTPPRKLHIKSYGCQMNVYDAQRMVDTLAAEGFVETASAEEADLVILNTCHIREKASEKVYSELGRLRAAKDQAARDGREMSVVVAGCVAQAEGDEIIRRAPVVDVVVGPQSYHHLPQLLARAKADGRALETEFPVEDKFGFLPQPSRQAIRARGISAFVTVQEGCDKFCTFCVVPYTRGAEVSRPVAKIVEDVQRLADNGVREITLIGQNVNAYHGDGPDGRPWPFGKLLHRLADIPGIVRLRYSTSHPRDVEDSLIEAHRDLGALMPFVHLPVQSGSDRILEAMNRRHTADDYRRVVDRFRHVRQDIAFSSDFIVGFPGETEQDFTATLALVTQIGYAGAYSFKYSPRPGTPAAEMKETVSTADMDERLVRLQNLIDSQQSAFNRAAVGTTVDVLFERAARNPGQIVGRTAYLQPAHVVASADIIGQILPVTVASLERYSLLGSLASAPASRASADDAPPVGASSPAIMGV.

The MTTase N-terminal domain maps to 5 to 125 (RKLHIKSYGC…LPQLLARAKA (121 aa)). [4Fe-4S] cluster contacts are provided by Cys-14, Cys-50, Cys-88, Cys-166, Cys-170, and Cys-173. In terms of domain architecture, Radical SAM core spans 152–384 (RARGISAFVT…QNLIDSQQSA (233 aa)). In terms of domain architecture, TRAM spans 387–449 (RAAVGTTVDV…RYSLLGSLAS (63 aa)). Residues 453–462 (SRASADDAPP) show a composition bias toward low complexity. Positions 453–473 (SRASADDAPPVGASSPAIMGV) are disordered.

Belongs to the methylthiotransferase family. MiaB subfamily. Monomer. [4Fe-4S] cluster is required as a cofactor.

The protein localises to the cytoplasm. It catalyses the reaction N(6)-dimethylallyladenosine(37) in tRNA + (sulfur carrier)-SH + AH2 + 2 S-adenosyl-L-methionine = 2-methylsulfanyl-N(6)-dimethylallyladenosine(37) in tRNA + (sulfur carrier)-H + 5'-deoxyadenosine + L-methionine + A + S-adenosyl-L-homocysteine + 2 H(+). Functionally, catalyzes the methylthiolation of N6-(dimethylallyl)adenosine (i(6)A), leading to the formation of 2-methylthio-N6-(dimethylallyl)adenosine (ms(2)i(6)A) at position 37 in tRNAs that read codons beginning with uridine. In Nitrobacter hamburgensis (strain DSM 10229 / NCIMB 13809 / X14), this protein is tRNA-2-methylthio-N(6)-dimethylallyladenosine synthase.